Reading from the N-terminus, the 191-residue chain is Corrinoid adenosyltransferase (191 aa).

Residues 10–18, K28, 140–145, and N166 contribute to the ATP site; these read TRTGDNGTT and RRAERS.

Belongs to the Cob(I)alamin adenosyltransferase family.

It localises to the cytoplasm. The enzyme catalyses 2 cob(II)yrinate a,c diamide + reduced [electron-transfer flavoprotein] + 2 ATP = 2 adenosylcob(III)yrinate a,c-diamide + 2 triphosphate + oxidized [electron-transfer flavoprotein] + 3 H(+). It catalyses the reaction 2 cob(II)alamin + reduced [electron-transfer flavoprotein] + 2 ATP = 2 adenosylcob(III)alamin + 2 triphosphate + oxidized [electron-transfer flavoprotein] + 3 H(+). Its pathway is cofactor biosynthesis; adenosylcobalamin biosynthesis; adenosylcobalamin from cob(II)yrinate a,c-diamide: step 2/7. The polypeptide is Corrinoid adenosyltransferase (Mycobacterium leprae (strain TN)).